The chain runs to 319 residues: Myoblast determination protein 1 (319 aa).

Residue Met1 forms a Peptide (Met-Gly) (interchain with G-Cter in ubiquitin) linkage. Lys104 is modified (N6-methyllysine; by EHMT2). The region spanning 109 to 160 (DRRKAATMRERRRLSKVNEAFETLKRCTSSNPNQRLPKVEILRNAIRYIEGL) is the bHLH domain. 2 disordered regions span residues 174-221 (AAAA…SGAR) and 266-319 (APAL…YQVL). 2 stretches are compositionally biased toward polar residues: residues 197–207 (SDASSPRSNCS) and 308–319 (ASANPNPIYQVL).

Efficient DNA binding requires dimerization with another bHLH protein. Seems to form active heterodimers with ITF-2. Interacts with SUV39H1. Interacts with DDX5. Interacts with CHD2. Interacts with TSC22D3. Interacts with SETD3. Interacts with P-TEFB complex; promotes the transcriptional activity of MYOD1 through its CDK9-mediated phosphorylation. Interacts with CSRP3. Interacts with NUPR1. Phosphorylated by CDK9. This phosphorylation promotes its function in muscle differentiation. In terms of processing, acetylated by a complex containing EP300 and PCAF. The acetylation is essential to activate target genes. Conversely, its deacetylation by SIRT1 inhibits its function. Post-translationally, ubiquitinated on the N-terminus; which is required for proteasomal degradation. Methylation at Lys-104 by EHMT2/G9a inhibits myogenic activity.

The protein localises to the nucleus. In terms of biological role, acts as a transcriptional activator that promotes transcription of muscle-specific target genes and plays a role in muscle differentiation. Together with MYF5 and MYOG, co-occupies muscle-specific gene promoter core region during myogenesis. Induces fibroblasts to differentiate into myoblasts. Interacts with and is inhibited by the twist protein. This interaction probably involves the basic domains of both proteins. The chain is Myoblast determination protein 1 (MYOD1) from Sus scrofa (Pig).